A 439-amino-acid chain; its full sequence is Protein ABHD8 (439 aa).

2 disordered regions span residues A49 to G70 and P124 to R156. The span at A136–G145 shows a compositional bias: gly residues. A compositionally biased stretch (basic residues) spans G146–R156. In terms of domain architecture, AB hydrolase-1 spans V177–G279. Residues S252, D370, and H398 each act as charge relay system in the active site.

This sequence belongs to the AB hydrolase superfamily. Interacts with NLRP3 (via NACHT and LLR domains); this interaction is enhanced in the presence of NLRP3 inflammasome inducers, such as ATP, nigericin, silica, or alum. Interacts with ZDHHC12. As to quaternary structure, (Microbial infection) Interacts with SARS-CoV-2 nucleoprotein N; this interaction disrupts the NLRP3-ABHD8 association, enhancing NLRP3 stability, ultimately leading to increased inflammasome activation.

Its subcellular location is the cytoplasm. Functionally, negatively regulates NLRP3-driven inflammation. Promotes NLRP3 degradation through the chaperone-mediated autophagy (CMA) pathway, hence attenuating inflammasome activation and IL1B secretion. Acts by recruiting palmitoyltransferase ZDHHC12 to NLRP3, facilitating NLRP3 palmitoylation and subsequent degradation. This is Protein ABHD8 from Homo sapiens (Human).